A 249-amino-acid polypeptide reads, in one-letter code: Small ribosomal subunit protein uS2 (249 aa).

It belongs to the universal ribosomal protein uS2 family.

In Listeria monocytogenes serovar 1/2a (strain ATCC BAA-679 / EGD-e), this protein is Small ribosomal subunit protein uS2.